We begin with the raw amino-acid sequence, 218 residues long: UPF0319 protein swp_2242 (218 aa).

Positions 1-21 (MRLSQSVLTALLICVNSAAFA) are cleaved as a signal peptide.

This sequence belongs to the UPF0319 family.

The chain is UPF0319 protein swp_2242 from Shewanella piezotolerans (strain WP3 / JCM 13877).